Reading from the N-terminus, the 846-residue chain is Homeobox protein 12 (846 aa).

8 stretches are compositionally biased toward low complexity: residues 78–94 (IIGS…VQAT), 160–170 (PLSSSSTVVPA), 237–249 (GNHN…YNYN), 289–301 (QPQS…QLQP), 309–321 (LQPQ…QSQQ), 331–352 (NNNN…NNNN), 394–443 (NYNQ…SNSN), and 458–482 (NNNN…QQIY). Disordered regions lie at residues 78–103 (IIGS…PSSS), 151–177 (IVQP…PPSV), 230–249 (NGNG…YNYN), 286–374 (GTKQ…SSSP), 394–482 (NYNQ…QQIY), and 515–571 (FKQN…NNQF). Over residues 524–546 (NNDDDDDDDDDEEEEEEEEDDND) the composition is skewed to acidic residues. The stretch at 553–604 (SYDEENNNNNNNNNNNNQFKNESIIIGDNYYEIINDRIKSIKQKLHFLEKNS) forms a coiled coil. Residues 559-569 (NNNNNNNNNNN) are compositionally biased toward low complexity. The segment at residues 773-835 (DKKNRRTLND…NKRSREKNQR (63 aa)) is a DNA-binding region (homeobox).

It localises to the nucleus. Putative transcription factor. The chain is Homeobox protein 12 (hbx12) from Dictyostelium discoideum (Social amoeba).